The sequence spans 394 residues: MAKEAFLRKKPHINVGTIGHVDHGKTTLTSAITYVLAKKGLAQKMAYDQIDKAPEEKERGITINTAHVEYESDKRHYAHVDCPGHADYIKNMITGAAQMDGAILVVSAADGPMPQTREHILLARQVGVPYIVVFLNKVDMVDDKELLELVELEVRELLNQYGFPGDKIPIIKGSALKALEGDPEYEKNILELVEAMDNYIPIPERPKDQPFLMPIEDVFNIEGRGTVVTGRVERGTLKRMEEVEIVGIRPTTKTVVTDIEMFRKTLDTAEAGDNVGLLLRGIKKDDVERGQVVAKPGTITPHHKFNAQVYVLKKEEGGRHTAFFNGYRPQFFFRTTDVTGTVTLKEGVEMVMPGDNVEFMVELISPIAMEKSMRFAIREGGKTVGAGVVTEIIE.

One can recognise a tr-type G domain in the interval 10 to 204; that stretch reads KPHINVGTIG…AMDNYIPIPE (195 aa). A G1 region spans residues 19–26; sequence GHVDHGKT. 19–26 is a GTP binding site; it reads GHVDHGKT. Thr26 is a Mg(2+) binding site. The interval 60 to 64 is G2; that stretch reads GITIN. Residues 81–84 are G3; the sequence is DCPG. GTP contacts are provided by residues 81–85 and 136–139; these read DCPGH and NKVD. Residues 136–139 are G4; that stretch reads NKVD. The interval 174-176 is G5; sequence SAL.

Belongs to the TRAFAC class translation factor GTPase superfamily. Classic translation factor GTPase family. EF-Tu/EF-1A subfamily. Monomer.

The protein localises to the cytoplasm. It carries out the reaction GTP + H2O = GDP + phosphate + H(+). In terms of biological role, GTP hydrolase that promotes the GTP-dependent binding of aminoacyl-tRNA to the A-site of ribosomes during protein biosynthesis. This chain is Elongation factor Tu, found in Methylacidiphilum infernorum (isolate V4) (Methylokorus infernorum (strain V4)).